The chain runs to 231 residues: Casein kinase II subunit beta (231 aa).

It belongs to the casein kinase 2 subunit beta family. As to quaternary structure, tetramer composed of two alpha chains, one beta chain and one beta' chain. Phosphorylated by alpha subunit.

Functionally, regulatory subunit of casein kinase II/CK2. As part of the kinase complex regulates the basal catalytic activity of the alpha subunit a constitutively active serine/threonine-protein kinase that phosphorylates a large number of substrates containing acidic residues C-terminal to the phosphorylated serine or threonine. The chain is Casein kinase II subunit beta from Schizosaccharomyces pombe (strain 972 / ATCC 24843) (Fission yeast).